A 157-amino-acid chain; its full sequence is Cysteine protease Nivulian-2 (157 aa).

Belongs to the intron maturase 2 family. MatK subfamily. As to quaternary structure, monomer. Glycosylated. Accumulates in latex (at protein level).

Its activity is regulated as follows. Inhibited by HgCl(2), iodoacetamide (IAA) and, to a far lesser extent, by SDS, hydrogen peroxide H(1)O(2), KCl, NaCl, ZnCl(2), AgSO(4), CdCl(2), FeCl(3), PMSF, Pepstatin A and EDTA. Repressed moderately by many organic solvents such as diethyl ether, ethy lacetate, acetophenone, butanol, trichloroethylene, tetrahydrofuran, methanol, chloroform and dichloromethane, and, to a lesser extent, by propanol, benzyl alcohol and chlorobenzene. In terms of biological role, cysteine protease inducing milk clotting by cleaving casein. Exhibits biomedical activities such as wound healing, haemostatic and antibacterial activity, as well as agricultural application in biocontrol process against the infectious management of the root knot nematode Meloidogyne incognita. The sequence is that of Cysteine protease Nivulian-2 from Euphorbia nivulia (Leafy milk hedge).